Consider the following 531-residue polypeptide: CTP synthase (531 aa).

The interval 1 to 265 (MAKYIFITGG…DRIITERLNL (265 aa)) is amidoligase domain. Ser13 provides a ligand contact to CTP. Ser13 contacts UTP. 14–19 (SLGKGI) is a binding site for ATP. Residue Tyr54 coordinates L-glutamine. Asp71 provides a ligand contact to ATP. Mg(2+) contacts are provided by Asp71 and Glu139. Residues 146–148 (DIE), 186–191 (KTKPTQ), and Lys222 contribute to the CTP site. Residues 186–191 (KTKPTQ) and Lys222 contribute to the UTP site. Positions 290-529 (NVALVGKYVE…IRACLEYKRK (240 aa)) constitute a Glutamine amidotransferase type-1 domain. Residue Gly349 coordinates L-glutamine. Cys376 (nucleophile; for glutamine hydrolysis) is an active-site residue. L-glutamine is bound by residues 377–380 (LGMQ), Glu400, and Arg457. Catalysis depends on residues His502 and Glu504.

It belongs to the CTP synthase family. As to quaternary structure, homotetramer.

The enzyme catalyses UTP + L-glutamine + ATP + H2O = CTP + L-glutamate + ADP + phosphate + 2 H(+). It carries out the reaction L-glutamine + H2O = L-glutamate + NH4(+). It catalyses the reaction UTP + NH4(+) + ATP = CTP + ADP + phosphate + 2 H(+). Its pathway is pyrimidine metabolism; CTP biosynthesis via de novo pathway; CTP from UDP: step 2/2. Its activity is regulated as follows. Allosterically activated by GTP, when glutamine is the substrate; GTP has no effect on the reaction when ammonia is the substrate. The allosteric effector GTP functions by stabilizing the protein conformation that binds the tetrahedral intermediate(s) formed during glutamine hydrolysis. Inhibited by the product CTP, via allosteric rather than competitive inhibition. In terms of biological role, catalyzes the ATP-dependent amination of UTP to CTP with either L-glutamine or ammonia as the source of nitrogen. Regulates intracellular CTP levels through interactions with the four ribonucleotide triphosphates. This Aquifex aeolicus (strain VF5) protein is CTP synthase.